Reading from the N-terminus, the 237-residue chain is Probable GTP-binding protein EngB (237 aa).

An EngB-type G domain is found at 23–209 (AVPEVAFAGR…QAVIAGWLNL (187 aa)). Residues 31 to 38 (GRSNAGKS), 58 to 62 (GRTQH), 82 to 85 (DLPG), 149 to 152 (TKAD), and 187 to 190 (LFSS) each bind GTP. Residues S38 and T60 each contribute to the Mg(2+) site. The disordered stretch occupies residues 214–237 (KAEREPAAANSVPPAVPPASDPAA). Residues 227–237 (PAVPPASDPAA) are compositionally biased toward pro residues.

This sequence belongs to the TRAFAC class TrmE-Era-EngA-EngB-Septin-like GTPase superfamily. EngB GTPase family. The cofactor is Mg(2+).

Its function is as follows. Necessary for normal cell division and for the maintenance of normal septation. The polypeptide is Probable GTP-binding protein EngB (Cupriavidus taiwanensis (strain DSM 17343 / BCRC 17206 / CCUG 44338 / CIP 107171 / LMG 19424 / R1) (Ralstonia taiwanensis (strain LMG 19424))).